A 183-amino-acid polypeptide reads, in one-letter code: Apo-citrate lyase phosphoribosyl-dephospho-CoA transferase (183 aa).

The protein belongs to the CitX family.

The catalysed reaction is apo-[citrate lyase ACP] + 2'-(5''-triphospho-alpha-D-ribosyl)-3'-dephospho-CoA = holo-[citrate lyase ACP] + diphosphate. Transfers 2-(5''-triphosphoribosyl)-3'-dephosphocoenzyme-A on a serine residue to the apo-acyl carrier protein (gamma chain) of the citrate lyase to yield holo-acyl carrier protein. The sequence is that of Apo-citrate lyase phosphoribosyl-dephospho-CoA transferase from Escherichia coli O45:K1 (strain S88 / ExPEC).